A 173-amino-acid polypeptide reads, in one-letter code: Ribosome maturation factor RimP (173 aa).

It belongs to the RimP family.

Its subcellular location is the cytoplasm. In terms of biological role, required for maturation of 30S ribosomal subunits. This Chlorobium phaeobacteroides (strain DSM 266 / SMG 266 / 2430) protein is Ribosome maturation factor RimP.